Here is a 356-residue protein sequence, read N- to C-terminus: MIETDKLATEQRIIAATPASSHEEVFERALRPRQLDDYVGQEKVRGQLEIFIEAAKRRSEPLDHVLLFGPPGLGKTTLAHIIAREMGVNLRQTSGPVLERAGDLAALLTNLEANDVLFIDEIHRLSPVVEEILYPALEDYQIDIMIGEGPAARSVKLDLQPFTLVGATTRAGMLTNPLRDRFGIVARLEFYDADQLSRIVRRSASLLNAQIDPNGALEIAKRSRGTPRIANRLLRRVRDFAEVKADGQITAAVADAALAMLDVDPVGFDLMDRKLLEAILYKFDGGPVGIDNLAAAIGEERDTIEDVLEPYLIQQGFLQRTPRGRVATLLTYRHFGLSVPDARRPERDEWDTPDGK.

A large ATPase domain (RuvB-L) region spans residues 4-191 (TDKLATEQRI…FGIVARLEFY (188 aa)). ATP is bound by residues leucine 30, arginine 31, glycine 72, lysine 75, threonine 76, threonine 77, 138–140 (EDY), arginine 181, tyrosine 191, and arginine 228. Threonine 76 serves as a coordination point for Mg(2+). Residues 192 to 262 (DADQLSRIVR…VADAALAMLD (71 aa)) are small ATPAse domain (RuvB-S). Residues 265 to 356 (PVGFDLMDRK…RDEWDTPDGK (92 aa)) are head domain (RuvB-H). DNA is bound by residues arginine 301, arginine 320, and arginine 325.

It belongs to the RuvB family. As to quaternary structure, homohexamer. Forms an RuvA(8)-RuvB(12)-Holliday junction (HJ) complex. HJ DNA is sandwiched between 2 RuvA tetramers; dsDNA enters through RuvA and exits via RuvB. An RuvB hexamer assembles on each DNA strand where it exits the tetramer. Each RuvB hexamer is contacted by two RuvA subunits (via domain III) on 2 adjacent RuvB subunits; this complex drives branch migration. In the full resolvosome a probable DNA-RuvA(4)-RuvB(12)-RuvC(2) complex forms which resolves the HJ.

It is found in the cytoplasm. The enzyme catalyses ATP + H2O = ADP + phosphate + H(+). Its function is as follows. The RuvA-RuvB-RuvC complex processes Holliday junction (HJ) DNA during genetic recombination and DNA repair, while the RuvA-RuvB complex plays an important role in the rescue of blocked DNA replication forks via replication fork reversal (RFR). RuvA specifically binds to HJ cruciform DNA, conferring on it an open structure. The RuvB hexamer acts as an ATP-dependent pump, pulling dsDNA into and through the RuvAB complex. RuvB forms 2 homohexamers on either side of HJ DNA bound by 1 or 2 RuvA tetramers; 4 subunits per hexamer contact DNA at a time. Coordinated motions by a converter formed by DNA-disengaged RuvB subunits stimulates ATP hydrolysis and nucleotide exchange. Immobilization of the converter enables RuvB to convert the ATP-contained energy into a lever motion, pulling 2 nucleotides of DNA out of the RuvA tetramer per ATP hydrolyzed, thus driving DNA branch migration. The RuvB motors rotate together with the DNA substrate, which together with the progressing nucleotide cycle form the mechanistic basis for DNA recombination by continuous HJ branch migration. Branch migration allows RuvC to scan DNA until it finds its consensus sequence, where it cleaves and resolves cruciform DNA. This is Holliday junction branch migration complex subunit RuvB from Burkholderia cenocepacia (strain ATCC BAA-245 / DSM 16553 / LMG 16656 / NCTC 13227 / J2315 / CF5610) (Burkholderia cepacia (strain J2315)).